We begin with the raw amino-acid sequence, 121 residues long: Phosphoribosyl-AMP cyclohydrolase (121 aa).

D76 contributes to the Mg(2+) binding site. C77 contacts Zn(2+). Residues D78 and D80 each contribute to the Mg(2+) site. C93 and C100 together coordinate Zn(2+).

This sequence belongs to the PRA-CH family. Homodimer. Mg(2+) serves as cofactor. Requires Zn(2+) as cofactor.

The protein resides in the cytoplasm. The catalysed reaction is 1-(5-phospho-beta-D-ribosyl)-5'-AMP + H2O = 1-(5-phospho-beta-D-ribosyl)-5-[(5-phospho-beta-D-ribosylamino)methylideneamino]imidazole-4-carboxamide. Its pathway is amino-acid biosynthesis; L-histidine biosynthesis; L-histidine from 5-phospho-alpha-D-ribose 1-diphosphate: step 3/9. Its function is as follows. Catalyzes the hydrolysis of the adenine ring of phosphoribosyl-AMP. The polypeptide is Phosphoribosyl-AMP cyclohydrolase (Methanococcoides burtonii (strain DSM 6242 / NBRC 107633 / OCM 468 / ACE-M)).